A 286-amino-acid polypeptide reads, in one-letter code: Shikimate dehydrogenase (NADP(+)) (286 aa).

Shikimate-binding positions include 20 to 22 (SLS) and Ser67. Lys71 (proton acceptor) is an active-site residue. Shikimate contacts are provided by Asn92 and Asp107. Residues 131 to 135 (GGGGA) and Ala230 contribute to the NADP(+) site. Position 232 (Tyr232) interacts with shikimate. Gly253 is a binding site for NADP(+).

The protein belongs to the shikimate dehydrogenase family. In terms of assembly, homodimer.

The catalysed reaction is shikimate + NADP(+) = 3-dehydroshikimate + NADPH + H(+). It functions in the pathway metabolic intermediate biosynthesis; chorismate biosynthesis; chorismate from D-erythrose 4-phosphate and phosphoenolpyruvate: step 4/7. Involved in the biosynthesis of the chorismate, which leads to the biosynthesis of aromatic amino acids. Catalyzes the reversible NADPH linked reduction of 3-dehydroshikimate (DHSA) to yield shikimate (SA). In Lactococcus lactis subsp. lactis (strain IL1403) (Streptococcus lactis), this protein is Shikimate dehydrogenase (NADP(+)).